A 314-amino-acid chain; its full sequence is Probable RuBisCO transcriptional regulator (314 aa).

The HTH lysR-type domain maps to 6–63; the sequence is FTLDQLKIIKTIHREGSFKTAAKKLYISQPAVSRQVQNLERQLNTPIFYRDKRKARLT. A DNA-binding region (H-T-H motif) is located at residues 23–42; sequence FKTAAKKLYISQPAVSRQVQ.

Belongs to the LysR transcriptional regulatory family.

The protein localises to the plastid. Its subcellular location is the chloroplast. Functionally, trans-acting transcriptional regulator of RuBisCO genes (rbcL and rbcS) expression. The protein is Probable RuBisCO transcriptional regulator (rbcR) of Emiliania huxleyi (Coccolithophore).